We begin with the raw amino-acid sequence, 198 residues long: Probable GTP-binding protein EngB (198 aa).

In terms of domain architecture, EngB-type G spans 21 to 195 (NFSEVAFLGR…EDIIINQTLG (175 aa)). GTP-binding positions include 29–36 (GRSNVGKS), 56–60 (GKTQL), 81–84 (DLPG), 151–154 (TKCD), and 174–176 (VSN). Positions 36 and 58 each coordinate Mg(2+).

The protein belongs to the TRAFAC class TrmE-Era-EngA-EngB-Septin-like GTPase superfamily. EngB GTPase family. The cofactor is Mg(2+).

Its function is as follows. Necessary for normal cell division and for the maintenance of normal septation. The polypeptide is Probable GTP-binding protein EngB (Campylobacter jejuni (strain RM1221)).